A 115-amino-acid chain; its full sequence is Non-specific lipid-transfer protein 4.3 (115 aa).

A signal peptide spans 1–25 (MARAAATQLVLVAMVAAMLLVATDA). 4 disulfide bridges follow: Cys-29–Cys-77, Cys-39–Cys-54, Cys-55–Cys-97, and Cys-75–Cys-111.

This sequence belongs to the plant LTP family.

Plant non-specific lipid-transfer proteins transfer phospholipids as well as galactolipids across membranes. May play a role in wax or cutin deposition in the cell walls of expanding epidermal cells and certain secretory tissues. The polypeptide is Non-specific lipid-transfer protein 4.3 (LTP4.3) (Hordeum vulgare (Barley)).